The chain runs to 360 residues: Aminomethyltransferase (360 aa).

Belongs to the GcvT family. The glycine cleavage system is composed of four proteins: P, T, L and H.

It carries out the reaction N(6)-[(R)-S(8)-aminomethyldihydrolipoyl]-L-lysyl-[protein] + (6S)-5,6,7,8-tetrahydrofolate = N(6)-[(R)-dihydrolipoyl]-L-lysyl-[protein] + (6R)-5,10-methylene-5,6,7,8-tetrahydrofolate + NH4(+). Its function is as follows. The glycine cleavage system catalyzes the degradation of glycine. In Pseudomonas putida (strain ATCC 47054 / DSM 6125 / CFBP 8728 / NCIMB 11950 / KT2440), this protein is Aminomethyltransferase.